A 651-amino-acid chain; its full sequence is A-type voltage-gated potassium channel KCND1 (651 aa).

Residues 1–183 (MAAGVATWLP…RAFENPHTST (183 aa)) are Cytoplasmic-facing. The interaction with KCNIP1, KCNIP2, and other family members stretch occupies residues 2-20 (AAGVATWLPFARAAAVGWL). Zn(2+)-binding residues include histidine 104, cysteine 131, and cysteine 132. Residues 144-164 (AERLAEDEEAEQAGEGPALPA) are disordered. The helical transmembrane segment at 184-205 (AALVFYYVTGFFIAVSVIANVV) threads the bilayer. Topologically, residues 206 to 230 (ETIPCRGTPRWPSKEQSCGDRFPTA) are extracellular. The helical transmembrane segment at 231-252 (FFCMDTACVLIFTGEYLLRLFA) threads the bilayer. Topologically, residues 253–263 (APSRCRFLRSV) are cytoplasmic. The helical transmembrane segment at 264–284 (MSLIDVVAILPYYIGLFVPKN) threads the bilayer. The Extracellular portion of the chain corresponds to 285–287 (DDV). Residues 288 to 308 (SGAFVTLRVFRVFRIFKFSRH) traverse the membrane as a helical; Voltage-sensor segment. The Cytoplasmic segment spans residues 309-323 (SQGLRILGYTLKSCA). Residues 310 to 323 (QGLRILGYTLKSCA) form an S4-S5 linker region. A helical membrane pass occupies residues 324 to 345 (SELGFLLFSLTMAIIIFATVMF). At 346–359 (YAEKGTSKTNFTSI) the chain is on the extracellular side. Asparagine 355 is a glycosylation site (N-linked (GlcNAc...) asparagine). Positions 360 to 371 (PAAFWYTIVTMT) form an intramembrane region, helical. The Selectivity filter signature appears at 372-377 (TLGYGD). An intramembrane segment occupies 372-379 (TLGYGDMV). Residues 380-386 (PSTIAGK) are Extracellular-facing. A helical transmembrane segment spans residues 387-415 (IFGSICSLSGVLVIALPVPVIVSNFSRIY). At 416–651 (HQNQRADKRR…LPETVKISSL (236 aa)) the chain is on the cytoplasmic side. Serine 458 carries the phosphoserine modification. The required for dendritic targeting stretch occupies residues 474 to 489 (FEQQHHHLLHCLEKTT). Position 555 is a phosphoserine (serine 555). Disordered stretches follow at residues 566 to 585 (RRSP…HDSL) and 601 to 651 (IPTP…ISSL). The segment covering 626–637 (TPNTTLRNSSLG) has biased composition (polar residues).

The protein belongs to the potassium channel family. D (Shal) (TC 1.A.1.2) subfamily. Kv4.1/KCND1 sub-subfamily. Component of heteromultimeric potassium channels. Identified in potassium channel complexes containing KCND1, KCND2, KCND3, KCNIP1, KCNIP2, KCNIP3, KCNIP4, DPP6 and DPP10.

It is found in the cell membrane. The catalysed reaction is K(+)(in) = K(+)(out). Its function is as follows. A-type voltage-gated potassium channel that mediates transmembrane potassium transport in excitable membranes in the brain. Mediates A-type current I(SA) in suprachiasmatic nucleus (SCN) neurons. Exhibits a low-threshold A-type current with a hyperpolarized steady-state inactivation midpoint and the recovery process was steeply voltage-dependent, with recovery being markedly faster at more negative potentials. May regulates repetitive firing rates in the suprachiasmatic nucleus (SCN) neurons and circadian rhythms in neuronal excitability and behavior. Contributes to the regulation of the circadian rhythm of action potential firing in suprachiasmatic nucleus neurons, which regulates the circadian rhythm of locomotor activity. The regulatory subunit KCNIP1 modulates the kinetics of channel inactivation, increases the current amplitudes and accelerates recovery from inactivation, shifts activation in a depolarizing direction. The regulatory subunit DPP10 decreases the voltage sensitivity of the inactivation channel gating. This chain is A-type voltage-gated potassium channel KCND1, found in Mus musculus (Mouse).